The sequence spans 267 residues: 4-hydroxy-tetrahydrodipicolinate reductase (267 aa).

8–13 contributes to the NAD(+) binding site; that stretch reads GASGRM. Arginine 35 is a binding site for NADP(+). Residues 98–100 and 122–125 each bind NAD(+); these read GTT and APNM. Histidine 155 (proton donor/acceptor) is an active-site residue. Histidine 156 contacts (S)-2,3,4,5-tetrahydrodipicolinate. Lysine 159 acts as the Proton donor in catalysis. Position 165–166 (165–166) interacts with (S)-2,3,4,5-tetrahydrodipicolinate; sequence GT.

The protein belongs to the DapB family.

The protein localises to the cytoplasm. It catalyses the reaction (S)-2,3,4,5-tetrahydrodipicolinate + NAD(+) + H2O = (2S,4S)-4-hydroxy-2,3,4,5-tetrahydrodipicolinate + NADH + H(+). The enzyme catalyses (S)-2,3,4,5-tetrahydrodipicolinate + NADP(+) + H2O = (2S,4S)-4-hydroxy-2,3,4,5-tetrahydrodipicolinate + NADPH + H(+). It functions in the pathway amino-acid biosynthesis; L-lysine biosynthesis via DAP pathway; (S)-tetrahydrodipicolinate from L-aspartate: step 4/4. Functionally, catalyzes the conversion of 4-hydroxy-tetrahydrodipicolinate (HTPA) to tetrahydrodipicolinate. The chain is 4-hydroxy-tetrahydrodipicolinate reductase from Hahella chejuensis (strain KCTC 2396).